Reading from the N-terminus, the 215-residue chain is Adenylate kinase (215 aa).

10-15 provides a ligand contact to ATP; it reads GAGKGT. The NMP stretch occupies residues 30–59; the sequence is STGDILRENVKNETELGKKAKEYMDKGLLV. Residues T31, R36, 57–59, 85–88, and Q92 each bind AMP; these read LLV and GFPR. The tract at residues 126–163 is LID; that stretch reads GRRICKNCGASFHVIYRPPQKEGVCDVCGGELYQREDD. R127 is an ATP binding site. Residues C130 and C133 each contribute to the Zn(2+) site. 136-137 contributes to the ATP binding site; it reads SF. Positions 150 and 153 each coordinate Zn(2+). Residues R160 and R171 each coordinate AMP. Q198 contacts ATP.

This sequence belongs to the adenylate kinase family. Monomer.

Its subcellular location is the cytoplasm. The enzyme catalyses AMP + ATP = 2 ADP. Its pathway is purine metabolism; AMP biosynthesis via salvage pathway; AMP from ADP: step 1/1. In terms of biological role, catalyzes the reversible transfer of the terminal phosphate group between ATP and AMP. Plays an important role in cellular energy homeostasis and in adenine nucleotide metabolism. The polypeptide is Adenylate kinase (Caldicellulosiruptor bescii (strain ATCC BAA-1888 / DSM 6725 / KCTC 15123 / Z-1320) (Anaerocellum thermophilum)).